The chain runs to 200 residues: Thymidine kinase (200 aa).

Residues 15–22 and 88–91 contribute to the ATP site; these read GSMFSGKS and DEVQ. The active-site Proton acceptor is Glu-89. Cys-145, Cys-148, Cys-183, and His-186 together coordinate Zn(2+).

It belongs to the thymidine kinase family. Homotetramer.

Its subcellular location is the cytoplasm. It catalyses the reaction thymidine + ATP = dTMP + ADP + H(+). This is Thymidine kinase from Bacillus pumilus (strain SAFR-032).